The chain runs to 47 residues: Delta-actitoxin-Axm1g (47 aa).

3 disulfides stabilise this stretch: C4-C44, C6-C34, and C27-C45.

It belongs to the sea anemone sodium channel inhibitory toxin family. Type I subfamily.

It is found in the secreted. Its subcellular location is the nematocyst. This chain is Delta-actitoxin-Axm1g, found in Anthopleura xanthogrammica (Giant green sea anemone).